Here is a 119-residue protein sequence, read N- to C-terminus: T cell receptor alpha variable 29/delta variable 5 (119 aa).

The N-terminal stretch at 1 to 21 is a signal peptide; that stretch reads MAMLLGASVLILWLQPDWVNS. The region spanning 22–119 is the Ig-like domain; the sequence is QQKNDDQQVK…DSAVYFCAAS (98 aa). Cysteine 49 and cysteine 116 are oxidised to a cystine. Asparagine 93 carries N-linked (GlcNAc...) asparagine glycosylation.

As to quaternary structure, alpha-beta TR is a heterodimer composed of an alpha and beta chain; disulfide-linked. The alpha-beta TR is associated with the transmembrane signaling CD3 coreceptor proteins to form the TR-CD3 (TcR or TCR). The assembly of alpha-beta TR heterodimers with CD3 occurs in the endoplasmic reticulum where a single alpha-beta TR heterodimer associates with one CD3D-CD3E heterodimer, one CD3G-CD3E heterodimer and one CD247 homodimer forming a stable octameric structure. CD3D-CD3E and CD3G-CD3E heterodimers preferentially associate with TR alpha and TR beta chains, respectively. The association of the CD247 homodimer is the last step of TcR assembly in the endoplasmic reticulum and is required for transport to the cell surface.

The protein resides in the cell membrane. Functionally, v region of the variable domain of T cell receptor (TR) alpha chain that participates in the antigen recognition. Alpha-beta T cell receptors are antigen specific receptors which are essential to the immune response and are present on the cell surface of T lymphocytes. Recognize peptide-major histocompatibility (MH) (pMH) complexes that are displayed by antigen presenting cells (APC), a prerequisite for efficient T cell adaptive immunity against pathogens. Binding of alpha-beta TR to pMH complex initiates TR-CD3 clustering on the cell surface and intracellular activation of LCK that phosphorylates the ITAM motifs of CD3G, CD3D, CD3E and CD247 enabling the recruitment of ZAP70. In turn ZAP70 phosphorylates LAT, which recruits numerous signaling molecules to form the LAT signalosome. The LAT signalosome propagates signal branching to three major signaling pathways, the calcium, the mitogen-activated protein kinase (MAPK) kinase and the nuclear factor NF-kappa-B (NF-kB) pathways, leading to the mobilization of transcription factors that are critical for gene expression and essential for T cell growth and differentiation. The T cell repertoire is generated in the thymus, by V-(D)-J rearrangement. This repertoire is then shaped by intrathymic selection events to generate a peripheral T cell pool of self-MH restricted, non-autoaggressive T cells. Post-thymic interaction of alpha-beta TR with the pMH complexes shapes TR structural and functional avidity. This is T cell receptor alpha variable 29/delta variable 5 from Homo sapiens (Human).